A 288-amino-acid chain; its full sequence is Thymidylate synthase (288 aa).

DUMP is bound by residues Arg21 and 150-151 (RR). The active-site Nucleophile is the Cys170. Residues 191 to 194 (RSGD), Asn202, and 232 to 234 (HIY) each bind dUMP. Asp194 is a binding site for (6R)-5,10-methylene-5,6,7,8-tetrahydrofolate. Ala287 contacts (6R)-5,10-methylene-5,6,7,8-tetrahydrofolate.

The protein belongs to the thymidylate synthase family. Bacterial-type ThyA subfamily. In terms of assembly, homodimer.

Its subcellular location is the cytoplasm. It carries out the reaction dUMP + (6R)-5,10-methylene-5,6,7,8-tetrahydrofolate = 7,8-dihydrofolate + dTMP. It functions in the pathway pyrimidine metabolism; dTTP biosynthesis. Functionally, catalyzes the reductive methylation of 2'-deoxyuridine-5'-monophosphate (dUMP) to 2'-deoxythymidine-5'-monophosphate (dTMP) while utilizing 5,10-methylenetetrahydrofolate (mTHF) as the methyl donor and reductant in the reaction, yielding dihydrofolate (DHF) as a by-product. This enzymatic reaction provides an intracellular de novo source of dTMP, an essential precursor for DNA biosynthesis. This is Thymidylate synthase from Mesoplasma florum (strain ATCC 33453 / NBRC 100688 / NCTC 11704 / L1) (Acholeplasma florum).